The chain runs to 60 residues: Cytotoxin 3 (60 aa).

4 cysteine pairs are disulfide-bonded: Cys-3-Cys-21, Cys-14-Cys-38, Cys-42-Cys-53, and Cys-54-Cys-59.

The protein belongs to the three-finger toxin family. Short-chain subfamily. Type IA cytotoxin sub-subfamily. As to quaternary structure, monomer in solution; Homodimer and oligomer in the presence of negatively charged lipids forming a pore with a size ranging between 20 and 30 Angstroms. As to expression, expressed by the venom gland.

The protein resides in the secreted. It localises to the target cell membrane. Its function is as follows. Shows cytolytic activity on many different cells by forming pore in lipid membranes. In vivo, increases heart rate or kills the animal by cardiac arrest. In addition, it binds to heparin with high affinity, interacts with Kv channel-interacting protein 1 (KCNIP1) in a calcium-independent manner, and binds to integrin alpha-V/beta-3 (ITGAV/ITGB3) with moderate affinity. In Naja naja (Indian cobra), this protein is Cytotoxin 3.